The following is a 988-amino-acid chain: Transposase for transposon Tn21 (988 aa).

The tract at residues 672 to 696 is disordered; the sequence is GDGTTSSSDEQNFRTASKAKSTGHI. Positions 674-695 are enriched in polar residues; that stretch reads GTTSSSDEQNFRTASKAKSTGH.

The protein belongs to the transposase 7 family.

Its function is as follows. Required for transposition of transposon Tn21. The chain is Transposase for transposon Tn21 (tnpA) from Escherichia coli.